Reading from the N-terminus, the 633-residue chain is Cyclic GMP-AMP synthase-like receptor 1 (633 aa).

Disordered stretches follow at residues 23 to 80, 107 to 214, and 250 to 276; these read KVHG…HPHT, FKGP…TDPF, and REDDKSDQEKRDSWKRREGSVDDRPSS. The segment covering 29–67 has biased composition (basic and acidic residues); it reads KQHESAHPPRERHTERTATKRSDETKTASRPTASHEGKT. Positions 68 to 80 are enriched in polar residues; sequence HTTNPRGQVHPHT. Basic and acidic residues-rich tracts occupy residues 125 to 143, 176 to 194, and 250 to 274; these read RKPETPKKPHSATKDDHRT, RKPDTPKKPHSATKDDHRT, and REDDKSDQEKRDSWKRREGSVDDRP. Mg(2+)-binding residues include Glu-353, Asp-355, and Asp-455.

Belongs to the mab-21 family. Requires Mg(2+) as cofactor. Mn(2+) is required as a cofactor.

It catalyses the reaction UTP + ATP = 2',3'-cUAMP + 2 diphosphate. Functionally, nucleotidyltransferase that catalyzes the formation of cyclic UMP-AMP (2',3'-cUAMP) from ATP and UTP and plays a key role in innate immunity. Acts as a key sensor of double-stranded DNA (dsDNA), the presence of dsDNA in the cytoplasm being a danger signal that triggers the immune responses. Directly binds dsDNA, activating the nucleotidyltransferase activity, leading to synthesis of 2',3'-cUAMP, a second messenger that binds to and activates Sting, thereby triggering the immune response via activation of the NF-kappa-B transcription factor. The polypeptide is Cyclic GMP-AMP synthase-like receptor 1 (Crassostrea virginica (Eastern oyster)).